Reading from the N-terminus, the 312-residue chain is Tetraacyldisaccharide 4'-kinase (312 aa).

Residue 60-67 (IAGGSGKT) coordinates ATP.

The protein belongs to the LpxK family.

The enzyme catalyses a lipid A disaccharide + ATP = a lipid IVA + ADP + H(+). The protein operates within glycolipid biosynthesis; lipid IV(A) biosynthesis; lipid IV(A) from (3R)-3-hydroxytetradecanoyl-[acyl-carrier-protein] and UDP-N-acetyl-alpha-D-glucosamine: step 6/6. Its function is as follows. Transfers the gamma-phosphate of ATP to the 4'-position of a tetraacyldisaccharide 1-phosphate intermediate (termed DS-1-P) to form tetraacyldisaccharide 1,4'-bis-phosphate (lipid IVA). The polypeptide is Tetraacyldisaccharide 4'-kinase (Helicobacter acinonychis (strain Sheeba)).